The primary structure comprises 246 residues: Probable maleylacetoacetate isomerase 1 (246 aa).

The region spanning 32–116 (TKPILYSYWP…YLEETRPQPA (85 aa)) is the GST N-terminal domain. Glutathione is bound by residues 42 to 47 (SSCSWR), Val88, 100 to 101 (DS), Gln140, and 144 to 146 (NVS). A GST C-terminal domain is found at 121-241 (DPVKRAKIRE…HPSTQPDCPP (121 aa)).

Belongs to the GST superfamily. Zeta family. It depends on glutathione as a cofactor.

It localises to the cytoplasm. It carries out the reaction 4-maleylacetoacetate = 4-fumarylacetoacetate. The catalysed reaction is RX + glutathione = an S-substituted glutathione + a halide anion + H(+). It functions in the pathway amino-acid degradation; L-phenylalanine degradation; acetoacetate and fumarate from L-phenylalanine: step 5/6. Catalyzes the glutathione dependent oxygenation of dichloroacetic acid to glyoxylic acid in vitro. Possesses low glutathione thioltransferase activity toward 4-hydroxynonenal (4-HNE). Has no glutathione thioltransferase activity with adrenochrome, phenethyl isothiocyanate (PEITC), 5-hydroperoxyeicosatetraenoic acid ((5S)-HpETE), prostaglandin A2 (PGA2) or 2-hydroxyethyldisulfide (HED). The chain is Probable maleylacetoacetate isomerase 1 (GstZ1) from Drosophila melanogaster (Fruit fly).